The primary structure comprises 813 residues: Acyl-homoserine lactone acylase QuiP (813 aa).

The signal sequence occupies residues 1 to 26 (MAAPAFPPFRLRFATAATLLGMLGLA). Residue S262 is the Nucleophile of the active site.

Belongs to the peptidase S45 family. Heterodimer of an alpha subunit and a beta subunit processed from the same precursor.

It is found in the periplasm. The catalysed reaction is an N-acyl-L-homoserine lactone + H2O = L-homoserine lactone + a carboxylate. Its function is as follows. Catalyzes the deacylation of acyl-homoserine lactone (AHL or acyl-HSL), releasing homoserine lactone (HSL) and the corresponding fatty acid. Possesses a specificity for the degradation of long-chain acyl-HSLs (side chains of seven or more carbons in length). The chain is Acyl-homoserine lactone acylase QuiP (quiP) from Pseudomonas putida (strain ATCC 47054 / DSM 6125 / CFBP 8728 / NCIMB 11950 / KT2440).